The following is a 382-amino-acid chain: uncharacterized protein (382 aa).

The next 12 helical transmembrane spans lie at G14–A34, V45–I65, F79–A99, F102–S122, L131–S151, L157–F177, L204–P224, A235–I255, V270–P290, A291–C311, A325–M345, and F348–L368.

This sequence belongs to the major facilitator superfamily. YcaD (TC 2.A.1.26) family.

It is found in the cell inner membrane. This is an uncharacterized protein from Escherichia coli O7:K1 (strain IAI39 / ExPEC).